We begin with the raw amino-acid sequence, 297 residues long: Large ribosomal subunit protein uL18 (297 aa).

Gly2 is subject to N-acetylglycine. N6-acetyllysine occurs at positions 5 and 48. The residue at position 185 (Ser185) is a Phosphoserine. At Lys220 the chain carries N6-acetyllysine; alternate. Lys220 participates in a covalent cross-link: Glycyl lysine isopeptide (Lys-Gly) (interchain with G-Cter in SUMO1); alternate. Residue Lys220 forms a Glycyl lysine isopeptide (Lys-Gly) (interchain with G-Cter in SUMO2); alternate linkage. Thr232 carries the post-translational modification Phosphothreonine. A disordered region spans residues 253-297; that stretch reads YEKKPKREVKKKRWNRPKMSLAQKKDRVAQKKASFLRAQERAAES. The segment covering 258–268 has biased composition (basic residues); that stretch reads KREVKKKRWNR. At Ser272 the chain carries Phosphoserine.

This sequence belongs to the universal ribosomal protein uL18 family. Component of the large ribosomal subunit (LSU). Part of the 5S RNP complex, which is a LSU subcomplex composed of the 5S RNA, RPL5 and RPL11. Component of a hexameric 5S RNP precursor complex, composed of 5S RNA, RRS1, RPF2/BXDC1, RPL5, RPL11 and HEATR3; this complex acts as a precursor for ribosome assembly. Interacts with NVL in an ATP-dependent manner. Interacts with RRP1B. Interacts with IPO5, IPO7 and KPNB1; these interactions may be involved in RPL5 nuclear import for the assembly of ribosomal subunits.

The protein resides in the cytoplasm. It is found in the nucleus. The protein localises to the nucleolus. Component of the ribosome, a large ribonucleoprotein complex responsible for the synthesis of proteins in the cell. The small ribosomal subunit (SSU) binds messenger RNAs (mRNAs) and translates the encoded message by selecting cognate aminoacyl-transfer RNA (tRNA) molecules. The large subunit (LSU) contains the ribosomal catalytic site termed the peptidyl transferase center (PTC), which catalyzes the formation of peptide bonds, thereby polymerizing the amino acids delivered by tRNAs into a polypeptide chain. The nascent polypeptides leave the ribosome through a tunnel in the LSU and interact with protein factors that function in enzymatic processing, targeting, and the membrane insertion of nascent chains at the exit of the ribosomal tunnel. As part of the 5S RNP/5S ribonucleoprotein particle it is an essential component of the LSU, required for its formation and the maturation of rRNAs. It also couples ribosome biogenesis to p53/TP53 activation. As part of the 5S RNP it accumulates in the nucleoplasm and inhibits MDM2, when ribosome biogenesis is perturbed, mediating the stabilization and the activation of TP53. This is Large ribosomal subunit protein uL18 (Rpl5) from Mus musculus (Mouse).